A 238-amino-acid polypeptide reads, in one-letter code: Endothelial protein C receptor (238 aa).

A signal peptide spans methionine 1–cysteine 17. Topologically, residues serine 18–serine 210 are extracellular. 4 N-linked (GlcNAc...) asparagine glycosylation sites follow: asparagine 47, asparagine 64, asparagine 136, and asparagine 172. Residues cysteine 118 and cysteine 186 are joined by a disulfide bond. The chain crosses the membrane as a helical span at residues leucine 211–leucine 231. Topologically, residues cysteine 232 to cysteine 238 are cytoplasmic.

N-glycosylated. In terms of processing, a soluble form exists; probably released by a metalloprotease. Seems to have the same activity as the membrane-bound form. As to expression, expressed strongly in the endothelial cells of arteries and veins in heart and lung, less intensely in capillaries in the lung and skin, and not at all in the endothelium of small vessels of the liver and kidney.

The protein localises to the membrane. Binds activated protein C. Enhances protein C activation by the thrombin-thrombomodulin complex; plays a role in the protein C pathway controlling blood coagulation. This Homo sapiens (Human) protein is Endothelial protein C receptor (PROCR).